The primary structure comprises 437 residues: Enolase (437 aa).

(2R)-2-phosphoglycerate is bound at residue Gln-162. Glu-204 acts as the Proton donor in catalysis. Residues Asp-251, Glu-297, and Asp-324 each contribute to the Mg(2+) site. 4 residues coordinate (2R)-2-phosphoglycerate: Lys-349, Arg-378, Ser-379, and Lys-400. The Proton acceptor role is filled by Lys-349.

The protein belongs to the enolase family. Mg(2+) serves as cofactor.

It localises to the cytoplasm. It is found in the secreted. The protein resides in the cell surface. It carries out the reaction (2R)-2-phosphoglycerate = phosphoenolpyruvate + H2O. It functions in the pathway carbohydrate degradation; glycolysis; pyruvate from D-glyceraldehyde 3-phosphate: step 4/5. Functionally, catalyzes the reversible conversion of 2-phosphoglycerate (2-PG) into phosphoenolpyruvate (PEP). It is essential for the degradation of carbohydrates via glycolysis. This chain is Enolase, found in Chlorobium limicola (strain DSM 245 / NBRC 103803 / 6330).